The primary structure comprises 459 residues: Bifunctional protein GlmU (459 aa).

A pyrophosphorylase region spans residues 1-229 (MSNFAIILAA…FDESLGVNDR (229 aa)). Residues 8-11 (LAAG), lysine 22, glutamine 72, and 77-78 (GT) each bind UDP-N-acetyl-alpha-D-glucosamine. Aspartate 102 provides a ligand contact to Mg(2+). The UDP-N-acetyl-alpha-D-glucosamine site is built by glycine 139, glutamate 154, asparagine 169, and asparagine 227. Asparagine 227 contributes to the Mg(2+) binding site. Residues 230 to 250 (VALATAESVMRRRINHKHMVN) form a linker region. The tract at residues 251–459 (GVSFVNPEAT…TRLPHHPKNQ (209 aa)) is N-acetyltransferase. The UDP-N-acetyl-alpha-D-glucosamine site is built by arginine 332 and lysine 350. Histidine 362 (proton acceptor) is an active-site residue. The UDP-N-acetyl-alpha-D-glucosamine site is built by tyrosine 365 and asparagine 376. Residues alanine 379, 385-386 (NY), serine 404, alanine 422, and arginine 439 each bind acetyl-CoA.

It in the N-terminal section; belongs to the N-acetylglucosamine-1-phosphate uridyltransferase family. In the C-terminal section; belongs to the transferase hexapeptide repeat family. As to quaternary structure, homotrimer. The cofactor is Mg(2+).

It localises to the cytoplasm. The enzyme catalyses alpha-D-glucosamine 1-phosphate + acetyl-CoA = N-acetyl-alpha-D-glucosamine 1-phosphate + CoA + H(+). The catalysed reaction is N-acetyl-alpha-D-glucosamine 1-phosphate + UTP + H(+) = UDP-N-acetyl-alpha-D-glucosamine + diphosphate. It functions in the pathway nucleotide-sugar biosynthesis; UDP-N-acetyl-alpha-D-glucosamine biosynthesis; N-acetyl-alpha-D-glucosamine 1-phosphate from alpha-D-glucosamine 6-phosphate (route II): step 2/2. It participates in nucleotide-sugar biosynthesis; UDP-N-acetyl-alpha-D-glucosamine biosynthesis; UDP-N-acetyl-alpha-D-glucosamine from N-acetyl-alpha-D-glucosamine 1-phosphate: step 1/1. Its pathway is bacterial outer membrane biogenesis; LPS lipid A biosynthesis. Catalyzes the last two sequential reactions in the de novo biosynthetic pathway for UDP-N-acetylglucosamine (UDP-GlcNAc). The C-terminal domain catalyzes the transfer of acetyl group from acetyl coenzyme A to glucosamine-1-phosphate (GlcN-1-P) to produce N-acetylglucosamine-1-phosphate (GlcNAc-1-P), which is converted into UDP-GlcNAc by the transfer of uridine 5-monophosphate (from uridine 5-triphosphate), a reaction catalyzed by the N-terminal domain. The protein is Bifunctional protein GlmU of Streptococcus pneumoniae (strain Hungary19A-6).